Consider the following 124-residue polypeptide: Small ribosomal subunit protein eS8 (124 aa).

Positions 1–22 (MQYQGRSKRSKTGARLRPRSKK) are enriched in basic residues. Disordered stretches follow at residues 1–40 (MQYQ…GEPR) and 102–124 (AGTA…RVDE). A compositionally biased stretch (basic and acidic residues) spans 23 to 32 (SKSELGREPT). Polar residues predominate over residues 106–124 (RVTSRPGQDGQVNATRVDE).

The protein belongs to the eukaryotic ribosomal protein eS8 family. In terms of assembly, part of the 30S ribosomal subunit.

This is Small ribosomal subunit protein eS8 from Halobacterium salinarum (strain ATCC 29341 / DSM 671 / R1).